Reading from the N-terminus, the 421-residue chain is MVRILPIILSALSSKLVASTILHSSIHSVPSGGEIISAEDLKELEISGNSICVDNRCYPKIFEPRHDWQPILPGQELPGGLDIRINMDTGLKEAKLNDEKNVGDNGSHELIVSSEDMKASPGDYEFSSDFKEMRNIIDSNPTLSSQDIARLEDSFDRIMEFAHDYKHGYKIITHEFALLANLSLNENLPLTLRELSTRVITSCLRNNPPVVEFINESFPNFKSKIMAALSNLNDSNHRSSNILIKRYLSILNELPVTSEDLPIYSTVVLQNVYERNNKDKQLQIKVLELISKILKADMYENDDTNLILFKRNAENWSSNLQEWANEFQEMVQNKSIDELHTRTFFDTLYNLKKIFKSDITINKGFLNWLAQQCKARQSNLDNGLQERDTEQDSFDKKLIDSRHLIFGNPMAHRIKNFRDEL.

A signal peptide spans 1–19 (MVRILPIILSALSSKLVAS). Residues Asn105, Asn181, Asn215, Asn233, Asn315, and Asn333 are each glycosylated (N-linked (GlcNAc...) asparagine). Positions 418-421 (RDEL) match the Prevents secretion from ER motif.

Belongs to the SIL1 family. Interacts with KAR2. N-glycosylated.

The protein resides in the endoplasmic reticulum lumen. In terms of biological role, required for protein translocation and folding in the endoplasmic reticulum (ER). Functions as a nucleotide exchange factor for the ER lumenal chaperone KAR2. This is Nucleotide exchange factor SIL1 (SIL1) from Saccharomyces cerevisiae (strain ATCC 204508 / S288c) (Baker's yeast).